We begin with the raw amino-acid sequence, 449 residues long: MSHITFDYSKVLESFAGQHEIDFLQGQVTEADKLLREGTGPGSDFLGWLDLPENYDKEEFARILTAAEKIKADSEVLVVIGIGGSYLGAKAAIDFLNHHFANLQTAKERKAPQILYAGNSISSTYLADLVEYVQDKEFSVNVISKSGTTTEPAIAFRVFKELLVKKYGQEEANKRIYATTDKVKGAVKLEADANNWETFVVPDNVGGRFSVLTAVGLLPIAASGADITALMEGANAARKDLSSDKISENIAYQYAAVRNVLYRKGYITEILANYEPSLQYFGEWWKQLAGESEGKDQKGIYPTSANFSTDLHSLGQFIQEGYRNLFETVIRVDNPRKNVIIPELAEDLDGLGYLQGKDVDFVNKKATDGVLLAHTDGGVPNMFVTLPAQDEFTLGYTIYFFELAIAVSGYMNAVNPFDQPGVEAYKRNMFALLGKPGFEALSAELNARL.

The active-site Proton donor is E291. Active-site residues include H312 and K426.

It belongs to the GPI family.

It is found in the cytoplasm. It catalyses the reaction alpha-D-glucose 6-phosphate = beta-D-fructose 6-phosphate. Its pathway is carbohydrate biosynthesis; gluconeogenesis. It functions in the pathway carbohydrate degradation; glycolysis; D-glyceraldehyde 3-phosphate and glycerone phosphate from D-glucose: step 2/4. In terms of biological role, catalyzes the reversible isomerization of glucose-6-phosphate to fructose-6-phosphate. The chain is Glucose-6-phosphate isomerase from Streptococcus pyogenes serotype M28 (strain MGAS6180).